Consider the following 1067-residue polypeptide: Glycine--tRNA ligase, chloroplastic/mitochondrial 2 (1067 aa).

A chloroplast and mitochondrion-targeting transit peptide spans 1–50 (MAILHFSLPLIVSFLRPHASPRFFLLPRSLSQSPFLSRRRFHRTSAVSSA). Residue Glu513 coordinates substrate. ATP contacts are provided by residues 589–596 (RNSGINIE), 619–624 (LVVPQN), 744–745 (RL), and 859–862 (GLRR). Residue 624-628 (NLLNE) coordinates substrate. Position 855–859 (855–859 (NDPFG)) interacts with substrate.

It belongs to the class-II aminoacyl-tRNA synthetase family. Homodimer.

The protein resides in the plastid. It is found in the chloroplast. Its subcellular location is the mitochondrion. The enzyme catalyses tRNA(Gly) + glycine + ATP = glycyl-tRNA(Gly) + AMP + diphosphate. In terms of biological role, catalyzes the attachment of glycine to tRNA(Gly). Is also able produce diadenosine tetraphosphate (Ap4A), a universal pleiotropic signaling molecule needed for cell regulation pathways, by direct condensation of 2 ATPs. The polypeptide is Glycine--tRNA ligase, chloroplastic/mitochondrial 2 (Arabidopsis thaliana (Mouse-ear cress)).